Consider the following 300-residue polypeptide: 4-diphosphocytidyl-2-C-methyl-D-erythritol kinase (300 aa).

Residue lysine 17 is part of the active site. 102–112 (PVAAGIGGGSA) contacts ATP. Aspartate 144 is an active-site residue.

It belongs to the GHMP kinase family. IspE subfamily.

It carries out the reaction 4-CDP-2-C-methyl-D-erythritol + ATP = 4-CDP-2-C-methyl-D-erythritol 2-phosphate + ADP + H(+). It participates in isoprenoid biosynthesis; isopentenyl diphosphate biosynthesis via DXP pathway; isopentenyl diphosphate from 1-deoxy-D-xylulose 5-phosphate: step 3/6. Functionally, catalyzes the phosphorylation of the position 2 hydroxy group of 4-diphosphocytidyl-2C-methyl-D-erythritol. The chain is 4-diphosphocytidyl-2-C-methyl-D-erythritol kinase from Bradyrhizobium sp. (strain ORS 278).